The sequence spans 387 residues: V-set and immunoglobulin domain-containing protein 1 (387 aa).

An N-terminal signal peptide occupies residues 1 to 21 (MVFAFWKVFLILSCLAGQVSV). In terms of domain architecture, Ig-like V-type spans 22–132 (VQVTIPDGFV…DFLGQNQGIL (111 aa)). Topologically, residues 22–232 (VQVTIPDGFV…EIDLTSSHPE (211 aa)) are extracellular. 2 N-linked (GlcNAc...) asparagine glycosylation sites follow: Asn-32 and Asn-38. Cys-43 and Cys-116 are oxidised to a cystine. N-linked (GlcNAc...) asparagine glycosylation is found at Asn-133, Asn-200, and Asn-219. The region spanning 140 to 227 (PSKPLCSVQG…GNSSCEIDLT (88 aa)) is the Ig-like C2-type domain. Cys-161 and Cys-211 are oxidised to a cystine. A helical transmembrane segment spans residues 233–253 (VGIIVGALIGSLVGAAIIISV). At 254–387 (VCFARNKAKA…SEDEKGVVKA (134 aa)) the chain is on the cytoplasmic side. Residues 266 to 387 (KERNSKTIAE…SEDEKGVVKA (122 aa)) are disordered. The span at 284 to 296 (PRGESEAMPREDA) shows a compositional bias: basic and acidic residues. The segment covering 299–308 (LEVTLPSSIH) has biased composition (polar residues). Over residues 325–335 (TQEPAPEPAPG) the composition is skewed to pro residues. Acidic residues predominate over residues 344–368 (LDIELELEPETQSELEPEPEPEPES).

Post-translationally, highly N-glycosylated. Appears not to contain significant amounts of O-linked carbohydrates or sialic acid in its sugar moieties. Detected only in stomach mucosa and testis, and to a much lesser level in pancreas (at protein level). Detected in gastric cancers (31%), esophageal carcinomas (50%) and ovarian cancers (23%).

It localises to the membrane. The protein is V-set and immunoglobulin domain-containing protein 1 (VSIG1) of Homo sapiens (Human).